We begin with the raw amino-acid sequence, 229 residues long: Heptaprenylglyceryl phosphate synthase (229 aa).

A sn-glycerol 1-phosphate-binding site is contributed by lysine 12. Mg(2+) contacts are provided by aspartate 14 and serine 40. Sn-glycerol 1-phosphate is bound by residues 159–164, glycine 189, and 209–210; these read YLEYSG and GN.

Belongs to the GGGP/HepGP synthase family. Group I subfamily. Homodimer. The cofactor is Mg(2+).

It carries out the reaction sn-glycerol 1-phosphate + all-trans-heptaprenyl diphosphate = 3-heptaprenyl-sn-glycero-1-phosphate + diphosphate. It participates in membrane lipid metabolism; glycerophospholipid metabolism. Prenyltransferase that catalyzes in vivo the transfer of the heptaprenyl moiety of heptaprenyl pyrophosphate (HepPP; 35 carbon atoms) to the C3 hydroxyl of sn-glycerol-1-phosphate (G1P), producing heptaprenylglyceryl phosphate (HepGP). This reaction is an ether-bond-formation step in the biosynthesis of archaea-type G1P-based membrane lipids found in Bacillales. This Bacillus cereus (strain ATCC 10987 / NRS 248) protein is Heptaprenylglyceryl phosphate synthase.